A 193-amino-acid chain; its full sequence is Acyl carrier protein phosphodiesterase (193 aa).

This sequence belongs to the AcpH family.

The enzyme catalyses holo-[ACP] + H2O = apo-[ACP] + (R)-4'-phosphopantetheine + H(+). Converts holo-ACP to apo-ACP by hydrolytic cleavage of the phosphopantetheine prosthetic group from ACP. The chain is Acyl carrier protein phosphodiesterase from Klebsiella pneumoniae (strain 342).